The primary structure comprises 255 residues: Diphthine synthase (255 aa).

S-adenosyl-L-methionine-binding positions include Leu-9, Asp-85, Val-88, 113–114 (SI), Leu-164, Ala-207, and His-232.

It belongs to the diphthine synthase family. In terms of assembly, homodimer.

The enzyme catalyses 2-[(3S)-amino-3-carboxypropyl]-L-histidyl-[translation elongation factor 2] + 3 S-adenosyl-L-methionine = diphthine-[translation elongation factor 2] + 3 S-adenosyl-L-homocysteine + 3 H(+). The protein operates within protein modification; peptidyl-diphthamide biosynthesis. In terms of biological role, S-adenosyl-L-methionine-dependent methyltransferase that catalyzes the trimethylation of the amino group of the modified target histidine residue in translation elongation factor 2 (EF-2), to form an intermediate called diphthine. The three successive methylation reactions represent the second step of diphthamide biosynthesis. The sequence is that of Diphthine synthase from Methanococcus maripaludis (strain C5 / ATCC BAA-1333).